The chain runs to 206 residues: Peptidyl-tRNA hydrolase (206 aa).

Y14 provides a ligand contact to tRNA. H19 (proton acceptor) is an active-site residue. Y64 and N66 together coordinate tRNA. The segment at 182–206 is disordered; the sequence is FNQKNKKKKEKEQPEAATDQLLENK.

This sequence belongs to the PTH family. As to quaternary structure, monomer.

The protein localises to the cytoplasm. It catalyses the reaction an N-acyl-L-alpha-aminoacyl-tRNA + H2O = an N-acyl-L-amino acid + a tRNA + H(+). Its function is as follows. Hydrolyzes ribosome-free peptidyl-tRNAs (with 1 or more amino acids incorporated), which drop off the ribosome during protein synthesis, or as a result of ribosome stalling. Functionally, catalyzes the release of premature peptidyl moieties from peptidyl-tRNA molecules trapped in stalled 50S ribosomal subunits, and thus maintains levels of free tRNAs and 50S ribosomes. In Desulforamulus reducens (strain ATCC BAA-1160 / DSM 100696 / MI-1) (Desulfotomaculum reducens), this protein is Peptidyl-tRNA hydrolase.